Consider the following 557-residue polypeptide: Urocanate hydratase (557 aa).

NAD(+)-binding positions include 53–54, Gln-131, 177–179, Asp-197, Arg-202, 243–244, 264–268, 274–275, and Tyr-323; these read GG, GMG, NA, QTSAH, and YL. The active site involves Cys-411. Residue Gly-493 coordinates NAD(+).

Belongs to the urocanase family. NAD(+) is required as a cofactor.

The protein localises to the cytoplasm. The catalysed reaction is 4-imidazolone-5-propanoate = trans-urocanate + H2O. The protein operates within amino-acid degradation; L-histidine degradation into L-glutamate; N-formimidoyl-L-glutamate from L-histidine: step 2/3. In terms of biological role, catalyzes the conversion of urocanate to 4-imidazolone-5-propionate. The sequence is that of Urocanate hydratase from Hahella chejuensis (strain KCTC 2396).